Here is a 323-residue protein sequence, read N- to C-terminus: Beta-ketoacyl-[acyl-carrier-protein] synthase III (323 aa).

Active-site residues include C114 and H250. Residues 251-255 (QANIR) form an ACP-binding region. N280 is an active-site residue.

Belongs to the thiolase-like superfamily. FabH family. As to quaternary structure, homodimer.

Its subcellular location is the cytoplasm. The catalysed reaction is malonyl-[ACP] + acetyl-CoA + H(+) = 3-oxobutanoyl-[ACP] + CO2 + CoA. Its pathway is lipid metabolism; fatty acid biosynthesis. Catalyzes the condensation reaction of fatty acid synthesis by the addition to an acyl acceptor of two carbons from malonyl-ACP. Catalyzes the first condensation reaction which initiates fatty acid synthesis and may therefore play a role in governing the total rate of fatty acid production. Possesses both acetoacetyl-ACP synthase and acetyl transacylase activities. Its substrate specificity determines the biosynthesis of branched-chain and/or straight-chain of fatty acids. This chain is Beta-ketoacyl-[acyl-carrier-protein] synthase III, found in Alkalilimnicola ehrlichii (strain ATCC BAA-1101 / DSM 17681 / MLHE-1).